The following is a 391-amino-acid chain: 3-ketoacyl-CoA thiolase (391 aa).

Cys-95 (acyl-thioester intermediate) is an active-site residue. Residues His-347 and Cys-377 each act as proton acceptor in the active site.

It belongs to the thiolase-like superfamily. Thiolase family. Heterotetramer of two alpha chains (FadB) and two beta chains (FadA).

The protein resides in the cytoplasm. It catalyses the reaction an acyl-CoA + acetyl-CoA = a 3-oxoacyl-CoA + CoA. The protein operates within lipid metabolism; fatty acid beta-oxidation. In terms of biological role, catalyzes the final step of fatty acid oxidation in which acetyl-CoA is released and the CoA ester of a fatty acid two carbons shorter is formed. This chain is 3-ketoacyl-CoA thiolase, found in Pseudomonas putida (strain ATCC 700007 / DSM 6899 / JCM 31910 / BCRC 17059 / LMG 24140 / F1).